Reading from the N-terminus, the 439-residue chain is Adenylosuccinate synthetase (439 aa).

GTP contacts are provided by residues 25-31, 53-55, and Lys-62; these read GDEGKGK and GHT. Asp-26 functions as the Proton acceptor in the catalytic mechanism. Mg(2+)-binding residues include Asp-26 and Gly-53. IMP-binding positions include 26–29 and 51–54; these read DEGK and NAGH. The Proton donor role is filled by His-54. IMP is bound by residues Thr-141, Arg-155, Asn-232, and Thr-247. Residue Thr-307 coordinates GTP. 307-313 lines the substrate pocket; sequence TTTNRPR. Arg-311 lines the IMP pocket. GTP contacts are provided by residues Arg-313, 339–341, and 425–427; these read KLD and GVG.

The protein belongs to the adenylosuccinate synthetase family. Homodimer. Mg(2+) serves as cofactor.

The protein localises to the cytoplasm. The catalysed reaction is IMP + L-aspartate + GTP = N(6)-(1,2-dicarboxyethyl)-AMP + GDP + phosphate + 2 H(+). It participates in purine metabolism; AMP biosynthesis via de novo pathway; AMP from IMP: step 1/2. Plays an important role in the salvage pathway for purine nucleotide biosynthesis. Catalyzes the first commited step in the biosynthesis of AMP from IMP. The sequence is that of Adenylosuccinate synthetase from Plasmodium chabaudi chabaudi.